A 283-amino-acid polypeptide reads, in one-letter code: Probable endonuclease 4 (283 aa).

Zn(2+) is bound by residues His-69, His-109, Glu-145, Asp-179, His-182, His-216, Asp-229, His-231, and Glu-261.

It belongs to the AP endonuclease 2 family. It depends on Zn(2+) as a cofactor.

The catalysed reaction is Endonucleolytic cleavage to 5'-phosphooligonucleotide end-products.. Its function is as follows. Endonuclease IV plays a role in DNA repair. It cleaves phosphodiester bonds at apurinic or apyrimidinic (AP) sites, generating a 3'-hydroxyl group and a 5'-terminal sugar phosphate. The chain is Probable endonuclease 4 from Desulfosudis oleivorans (strain DSM 6200 / JCM 39069 / Hxd3) (Desulfococcus oleovorans).